Consider the following 227-residue polypeptide: Phosphatidylserine decarboxylase proenzyme (227 aa).

Residue S184 is the Schiff-base intermediate with substrate; via pyruvic acid of the active site. At S184 the chain carries Pyruvic acid (Ser); by autocatalysis.

Belongs to the phosphatidylserine decarboxylase family. PSD-A subfamily. Heterodimer of a large membrane-associated beta subunit and a small pyruvoyl-containing alpha subunit. Pyruvate is required as a cofactor. In terms of processing, is synthesized initially as an inactive proenzyme. Formation of the active enzyme involves a self-maturation process in which the active site pyruvoyl group is generated from an internal serine residue via an autocatalytic post-translational modification. Two non-identical subunits are generated from the proenzyme in this reaction, and the pyruvate is formed at the N-terminus of the alpha chain, which is derived from the carboxyl end of the proenzyme. The post-translation cleavage follows an unusual pathway, termed non-hydrolytic serinolysis, in which the side chain hydroxyl group of the serine supplies its oxygen atom to form the C-terminus of the beta chain, while the remainder of the serine residue undergoes an oxidative deamination to produce ammonia and the pyruvoyl prosthetic group on the alpha chain.

The protein resides in the cell membrane. The enzyme catalyses a 1,2-diacyl-sn-glycero-3-phospho-L-serine + H(+) = a 1,2-diacyl-sn-glycero-3-phosphoethanolamine + CO2. The protein operates within phospholipid metabolism; phosphatidylethanolamine biosynthesis; phosphatidylethanolamine from CDP-diacylglycerol: step 2/2. Its function is as follows. Catalyzes the formation of phosphatidylethanolamine (PtdEtn) from phosphatidylserine (PtdSer). The chain is Phosphatidylserine decarboxylase proenzyme from Ehrlichia ruminantium (strain Gardel).